The following is a 75-amino-acid chain: U14-hexatoxin-Mg1a (75 aa).

An N-terminal signal peptide occupies residues 1–19 (MKLTLFILIVFVVLANVYA). Residues 20–31 (AGISERNIIGGR) constitute a propeptide that is removed on maturation.

Contains 4 disulfide bonds. In terms of tissue distribution, expressed by the venom gland.

Its subcellular location is the secreted. In terms of biological role, no toxicity is observed upon intracranial injection into mice and intrathorax injection into crickets. The protein is U14-hexatoxin-Mg1a of Macrothele gigas (Japanese funnel web spider).